An 85-amino-acid polypeptide reads, in one-letter code: Acyl carrier protein ScoB (85 aa).

The region spanning 1-77 (MPAPLTLDGF…QWWQLLSARQ (77 aa)) is the Carrier domain. Residue S38 is modified to O-(pantetheine 4'-phosphoryl)serine.

It belongs to the acyl carrier protein (ACP) family. It depends on pantetheine 4'-phosphate as a cofactor.

It functions in the pathway lipid metabolism; fatty acid metabolism. Functionally, acyl-carrier protein (ACP) involved in the biosynthesis of a unique class of isonitrile lipopeptides (INLPs). Is the dedicated ACP for the loading of activated acyl groups catalyzed by ScoC. The chain is Acyl carrier protein ScoB from Streptomyces coeruleorubidus.